Reading from the N-terminus, the 194-residue chain is ATP-dependent Clp protease proteolytic subunit (194 aa).

Ser-98 (nucleophile) is an active-site residue. His-123 is a catalytic residue.

The protein belongs to the peptidase S14 family. Fourteen ClpP subunits assemble into 2 heptameric rings which stack back to back to give a disk-like structure with a central cavity, resembling the structure of eukaryotic proteasomes.

It localises to the cytoplasm. It carries out the reaction Hydrolysis of proteins to small peptides in the presence of ATP and magnesium. alpha-casein is the usual test substrate. In the absence of ATP, only oligopeptides shorter than five residues are hydrolyzed (such as succinyl-Leu-Tyr-|-NHMec, and Leu-Tyr-Leu-|-Tyr-Trp, in which cleavage of the -Tyr-|-Leu- and -Tyr-|-Trp bonds also occurs).. Cleaves peptides in various proteins in a process that requires ATP hydrolysis. Has a chymotrypsin-like activity. Plays a major role in the degradation of misfolded proteins. The protein is ATP-dependent Clp protease proteolytic subunit of Clostridium botulinum (strain Hall / ATCC 3502 / NCTC 13319 / Type A).